We begin with the raw amino-acid sequence, 440 residues long: Thymidine phosphorylase (440 aa).

The protein belongs to the thymidine/pyrimidine-nucleoside phosphorylase family. In terms of assembly, homodimer.

It catalyses the reaction thymidine + phosphate = 2-deoxy-alpha-D-ribose 1-phosphate + thymine. Its pathway is pyrimidine metabolism; dTMP biosynthesis via salvage pathway; dTMP from thymine: step 1/2. In terms of biological role, the enzymes which catalyze the reversible phosphorolysis of pyrimidine nucleosides are involved in the degradation of these compounds and in their utilization as carbon and energy sources, or in the rescue of pyrimidine bases for nucleotide synthesis. This Salmonella schwarzengrund (strain CVM19633) protein is Thymidine phosphorylase.